Reading from the N-terminus, the 167-residue chain is Claudin domain-containing protein 2 (167 aa).

4 consecutive transmembrane segments (helical) span residues 7 to 27 (LQSGGILLSLVANVLMVLSTA), 59 to 79 (LAVTVACMVLAVGVGVVGMVM), 96 to 116 (TSAFLFLGGLLLLTALIGYTV), and 134 to 154 (WLALPFSILAGFCFLLADMIM).

Belongs to the PMP-22/EMP/MP20 family.

The protein resides in the membrane. This is Claudin domain-containing protein 2 (CLDND2) from Homo sapiens (Human).